The following is a 169-amino-acid chain: MSKATKRKHVVKEVLGDYVQPTEHQSIVKVLGSPGNNLHEVETAEGERFLASMPTKFRKNIWIKRGDFLIVDPIVEGEKVKAEIAFILYKDHQRLLQKEGLWPEGFTQDKTGLVAKEKESSGIQSTEAQAKPQGEDSETDDDSGLFVNTNHVHYEDSEEESESEEDEEN.

One can recognise an S1-like domain in the interval 14-89 (VLGDYVQPTE…VKAEIAFILY (76 aa)). Positions 115-169 (AKEKESSGIQSTEAQAKPQGEDSETDDDSGLFVNTNHVHYEDSEEESESEEDEEN) are disordered. Positions 156–169 (DSEEESESEEDEEN) are enriched in acidic residues.

The protein belongs to the EIF1AD family.

The protein resides in the nucleus. Its function is as follows. May play a role into cellular response to oxidative stress. May decrease cell proliferation. The protein is Probable RNA-binding protein EIF1AD (eif1ad) of Xenopus laevis (African clawed frog).